A 332-amino-acid polypeptide reads, in one-letter code: Holliday junction branch migration complex subunit RuvB (332 aa).

A large ATPase domain (RuvB-L) region spans residues methionine 1–tyrosine 181. ATP is bound by residues leucine 20, arginine 21, glycine 62, lysine 65, threonine 66, threonine 67, glutamate 128–phenylalanine 130, arginine 171, tyrosine 181, and arginine 218. Threonine 66 is a binding site for Mg(2+). The segment at alanine 182–aspartate 252 is small ATPAse domain (RuvB-S). A head domain (RuvB-H) region spans residues histidine 255 to lysine 332. 4 residues coordinate DNA: arginine 291, arginine 310, arginine 312, and arginine 315.

It belongs to the RuvB family. As to quaternary structure, homohexamer. Forms an RuvA(8)-RuvB(12)-Holliday junction (HJ) complex. HJ DNA is sandwiched between 2 RuvA tetramers; dsDNA enters through RuvA and exits via RuvB. An RuvB hexamer assembles on each DNA strand where it exits the tetramer. Each RuvB hexamer is contacted by two RuvA subunits (via domain III) on 2 adjacent RuvB subunits; this complex drives branch migration. In the full resolvosome a probable DNA-RuvA(4)-RuvB(12)-RuvC(2) complex forms which resolves the HJ.

It localises to the cytoplasm. The enzyme catalyses ATP + H2O = ADP + phosphate + H(+). In terms of biological role, the RuvA-RuvB-RuvC complex processes Holliday junction (HJ) DNA during genetic recombination and DNA repair, while the RuvA-RuvB complex plays an important role in the rescue of blocked DNA replication forks via replication fork reversal (RFR). RuvA specifically binds to HJ cruciform DNA, conferring on it an open structure. The RuvB hexamer acts as an ATP-dependent pump, pulling dsDNA into and through the RuvAB complex. RuvB forms 2 homohexamers on either side of HJ DNA bound by 1 or 2 RuvA tetramers; 4 subunits per hexamer contact DNA at a time. Coordinated motions by a converter formed by DNA-disengaged RuvB subunits stimulates ATP hydrolysis and nucleotide exchange. Immobilization of the converter enables RuvB to convert the ATP-contained energy into a lever motion, pulling 2 nucleotides of DNA out of the RuvA tetramer per ATP hydrolyzed, thus driving DNA branch migration. The RuvB motors rotate together with the DNA substrate, which together with the progressing nucleotide cycle form the mechanistic basis for DNA recombination by continuous HJ branch migration. Branch migration allows RuvC to scan DNA until it finds its consensus sequence, where it cleaves and resolves cruciform DNA. The sequence is that of Holliday junction branch migration complex subunit RuvB from Streptococcus pneumoniae (strain JJA).